Here is a 348-residue protein sequence, read N- to C-terminus: Eukaryotic translation initiation factor 3 subunit I (348 aa).

WD repeat units lie at residues 8–49, 51–91, 93–135, 147–186, 196–238, and 294–333; these read GHER…GTFE, HMGT…YTYE, PTPV…PKNQ, DGAK…FIDS, EKIH…KVYK, and GHFG…YDFE.

Belongs to the eIF-3 subunit I family. In terms of assembly, component of the eukaryotic translation initiation factor 3 (eIF-3) complex.

It is found in the cytoplasm. Its function is as follows. Component of the eukaryotic translation initiation factor 3 (eIF-3) complex, which is involved in protein synthesis of a specialized repertoire of mRNAs and, together with other initiation factors, stimulates binding of mRNA and methionyl-tRNAi to the 40S ribosome. The eIF-3 complex specifically targets and initiates translation of a subset of mRNAs involved in cell proliferation. In Meyerozyma guilliermondii (strain ATCC 6260 / CBS 566 / DSM 6381 / JCM 1539 / NBRC 10279 / NRRL Y-324) (Yeast), this protein is Eukaryotic translation initiation factor 3 subunit I.